Here is a 791-residue protein sequence, read N- to C-terminus: Pleckstrin homology domain-containing family H member 3 (791 aa).

The first 18 residues, 1 to 18, serve as a signal peptide directing secretion; sequence MPLPGGLWWLLCCRRGFT. Residues 29–41 are compositionally biased toward acidic residues; sequence LSGDGDEDEDDET. The disordered stretch occupies residues 29–71; the sequence is LSGDGDEDEDDETFELRSPSPAGGGRGSLDVTLTQPTRNGPIT. Serine 30 carries the phosphoserine modification. Residues 59 to 71 show a composition bias toward polar residues; the sequence is VTLTQPTRNGPIT. The 105-residue stretch at 95 to 199 folds into the PH domain; that stretch reads DVIVKGWLYR…WGVALREVIA (105 aa). In terms of domain architecture, MyTH4 spans 237-399; it reads HTSSALYAPL…PSLAEISALS (163 aa). An FERM domain is found at 404-755; sequence LLCTVHCPGA…ANPSPERPCS (352 aa). Over residues 549–559 the composition is skewed to low complexity; it reads PRGPLPLLDRL. Disordered regions lie at residues 549-580 and 593-623; these read PRGP…PPPS and LAKR…GGGS. Basic residues predominate over residues 594–605; that stretch reads AKRRAERARRIG. Arginine 636 carries the omega-N-methylarginine modification. The tract at residues 748-791 is disordered; sequence PSPERPCSSSGPPSQDLSDTSPPSQHQVLEKPQGQSGCLRQLQD. Positions 754–791 are enriched in polar residues; sequence CSSSGPPSQDLSDTSPPSQHQVLEKPQGQSGCLRQLQD.

The chain is Pleckstrin homology domain-containing family H member 3 (Plekhh3) from Rattus norvegicus (Rat).